A 344-amino-acid chain; its full sequence is Tetraacyldisaccharide 4'-kinase (344 aa).

68-75 (TAGGNGKT) serves as a coordination point for ATP.

This sequence belongs to the LpxK family.

The catalysed reaction is a lipid A disaccharide + ATP = a lipid IVA + ADP + H(+). It participates in glycolipid biosynthesis; lipid IV(A) biosynthesis; lipid IV(A) from (3R)-3-hydroxytetradecanoyl-[acyl-carrier-protein] and UDP-N-acetyl-alpha-D-glucosamine: step 6/6. In terms of biological role, transfers the gamma-phosphate of ATP to the 4'-position of a tetraacyldisaccharide 1-phosphate intermediate (termed DS-1-P) to form tetraacyldisaccharide 1,4'-bis-phosphate (lipid IVA). This chain is Tetraacyldisaccharide 4'-kinase, found in Photobacterium profundum (strain SS9).